A 446-amino-acid polypeptide reads, in one-letter code: Maltoporin (446 aa).

Residues 1-25 (MMITLRKLPLAVAVAAGVMSAQAMA) form the signal peptide.

This sequence belongs to the porin LamB (TC 1.B.3) family. In terms of assembly, homotrimer formed of three 18-stranded antiparallel beta-barrels, containing three independent channels.

It is found in the cell outer membrane. The catalysed reaction is beta-maltose(in) = beta-maltose(out). In terms of biological role, involved in the transport of maltose and maltodextrins. The polypeptide is Maltoporin (Escherichia coli O127:H6 (strain E2348/69 / EPEC)).